We begin with the raw amino-acid sequence, 610 residues long: Fimbrin (610 aa).

2 consecutive EF-hand domains span residues 7–42 (SEISEFKASFNQFDENGDGQISALELQKILTKCGEK) and 43–78 (VTGVEVRDMIKEVDTDGNGSIDFKEFLQVMQKARQH). Ca(2+) contacts are provided by aspartate 20, asparagine 22, aspartate 24, glutamine 26, glutamate 31, aspartate 56, aspartate 58, asparagine 60, serine 62, and glutamate 67. Actin-binding stretches follow at residues 102–365 (YSGS…NTHP) and 366–608 (ALEP…QVEM). Calponin-homology (CH) domains lie at 116–232 (DEEK…KIGL), 260–365 (LPVE…NTHP), 379–488 (TREE…RGHV), and 501–608 (PIAD…QVEM).

Its function is as follows. Binds to actin. This is Fimbrin (fimA) from Dictyostelium discoideum (Social amoeba).